We begin with the raw amino-acid sequence, 252 residues long: MQIVVATHNEGKLVEIRRILEEDLGADAENIELVSAGSLHLPDPVETGVTFQENALLKARAVAIRTGLPAVADDSGLIVDVMGNAPGILSARWAGAHGHDKANNALLLAQIEDIPDDKRTARFRCAAALVVPDTETGADVTGGVAADGITVHTTAADGSPAPVHARYAIKSETVELGDMPGRIIREARGVHGFGYDPLFVPDDQPAGRVSTEPDHEGEPLTSAEMTPAEKNAISHRGKALKALVPAIEALLH.

A substrate-binding site is contributed by 7 to 12 (THNEGK). The active-site Proton acceptor is Asp74. Asp74 provides a ligand contact to Mg(2+). Substrate contacts are provided by residues Ser75 and 193-196 (FGYD). The segment at 202-229 (DDQPAGRVSTEPDHEGEPLTSAEMTPAE) is disordered. Substrate is bound by residues Lys230 and 235–236 (HR).

The protein belongs to the HAM1 NTPase family. As to quaternary structure, homodimer. It depends on Mg(2+) as a cofactor.

The enzyme catalyses XTP + H2O = XMP + diphosphate + H(+). It catalyses the reaction dITP + H2O = dIMP + diphosphate + H(+). The catalysed reaction is ITP + H2O = IMP + diphosphate + H(+). Functionally, pyrophosphatase that catalyzes the hydrolysis of nucleoside triphosphates to their monophosphate derivatives, with a high preference for the non-canonical purine nucleotides XTP (xanthosine triphosphate), dITP (deoxyinosine triphosphate) and ITP. Seems to function as a house-cleaning enzyme that removes non-canonical purine nucleotides from the nucleotide pool, thus preventing their incorporation into DNA/RNA and avoiding chromosomal lesions. This Bifidobacterium longum (strain NCC 2705) protein is dITP/XTP pyrophosphatase.